A 595-amino-acid chain; its full sequence is Grainyhead-like protein 3 homolog (595 aa).

Positions 29–92 (DAWSKYLENP…CDQVKRSCSE (64 aa)) are transcription activation. Positions 221–454 (ANRDFEYTLE…DMETHPVLFI (234 aa)) constitute a Grh/CP2 DB domain. Residues 484–505 (SSQSFPKGLEAPPSKQQTSEDS) form a disordered region.

Belongs to the grh/CP2 family. Grainyhead subfamily.

The protein localises to the nucleus. Transcription factor playing important roles in primary neurulation and in the differentiation of stratified epithelia of both ectodermal and endodermal origin. Binds directly to the consensus DNA sequence 5'-AACCGGTT-3' acting as an activator and repressor on distinct target genes. The chain is Grainyhead-like protein 3 homolog (grhl3) from Xenopus laevis (African clawed frog).